The chain runs to 271 residues: Probable iron transport system membrane protein HI_0359 (271 aa).

Transmembrane regions (helical) follow at residues 17-37, 55-75, 93-113, 131-151, 168-188, 194-214, 221-241, and 245-265; these read ALLT…YLVL, IVLA…SGIF, TAMG…FTKI, SHQE…LIVF, VAGL…ALTI, VVGV…ALTL, MLWV…ILSY, and ASTG…ALAY.

It belongs to the ABC-3 integral membrane protein family.

Its subcellular location is the cell inner membrane. Its function is as follows. Part of an ATP-driven transport system HI_0359/HI_0360/HI_0361/HI_0362 for iron. This chain is Probable iron transport system membrane protein HI_0359, found in Haemophilus influenzae (strain ATCC 51907 / DSM 11121 / KW20 / Rd).